Consider the following 515-residue polypeptide: Bifunctional purine biosynthesis protein PurH (515 aa).

The 145-residue stretch at 1–145 (MTKRALISVS…KNHASVTVVV (145 aa)) folds into the MGS-like domain.

The protein belongs to the PurH family.

The enzyme catalyses (6R)-10-formyltetrahydrofolate + 5-amino-1-(5-phospho-beta-D-ribosyl)imidazole-4-carboxamide = 5-formamido-1-(5-phospho-D-ribosyl)imidazole-4-carboxamide + (6S)-5,6,7,8-tetrahydrofolate. It carries out the reaction IMP + H2O = 5-formamido-1-(5-phospho-D-ribosyl)imidazole-4-carboxamide. Its pathway is purine metabolism; IMP biosynthesis via de novo pathway; 5-formamido-1-(5-phospho-D-ribosyl)imidazole-4-carboxamide from 5-amino-1-(5-phospho-D-ribosyl)imidazole-4-carboxamide (10-formyl THF route): step 1/1. It functions in the pathway purine metabolism; IMP biosynthesis via de novo pathway; IMP from 5-formamido-1-(5-phospho-D-ribosyl)imidazole-4-carboxamide: step 1/1. This Streptococcus suis protein is Bifunctional purine biosynthesis protein PurH.